Here is a 397-residue protein sequence, read N- to C-terminus: Tyrosine aminotransferase (397 aa).

4 residues coordinate substrate: Gly34, Tyr66, Trp131, and Asn184. Lys247 bears the N6-(pyridoxal phosphate)lysine mark. Arg375 is a substrate binding site.

This sequence belongs to the class-I pyridoxal-phosphate-dependent aminotransferase family. In terms of assembly, homodimer. Pyridoxal 5'-phosphate is required as a cofactor.

The catalysed reaction is L-tyrosine + 2-oxoglutarate = 3-(4-hydroxyphenyl)pyruvate + L-glutamate. The enzyme catalyses 4-methylsulfanyl-2-oxobutanoate + L-tyrosine = 3-(4-hydroxyphenyl)pyruvate + L-methionine. It carries out the reaction an aromatic L-alpha-amino acid + 2-oxoglutarate = an aromatic oxo-acid + L-glutamate. It catalyses the reaction L-aspartate + 2-oxoglutarate = oxaloacetate + L-glutamate. It functions in the pathway amino-acid biosynthesis; L-methionine biosynthesis via salvage pathway; L-methionine from S-methyl-5-thio-alpha-D-ribose 1-phosphate: step 6/6. With respect to regulation, inhibited by malate and nitrotyrosine by approximately 20% at the higher concentration. At 100 uM, canaline and carboxymethoxylamine inhibit aminotransferase activity by 35 and 70%, respectively. Addition of 1.0 mM carboxymethoxylamine lead to a complete inhibition of the aminotransferase activity. Functionally, catalyzes the formation of methionine from 2-keto-4-methylthiobutyrate (KMTB) primarily using aromatic amino acids (tyrosine, phenylalanine and tryptophan) or glutamate as the amino donors. Histidine, leucine, asparagine, or arginine are also functional amino donors but to a lesser extent. Can also use alpha-ketoglutarate, oxaloacetate and pyruvate as the amino acceptors. In Klebsiella pneumoniae, this protein is Tyrosine aminotransferase (tyrB).